The sequence spans 418 residues: NADH-quinone oxidoreductase subunit D (418 aa).

This sequence belongs to the complex I 49 kDa subunit family. In terms of assembly, NDH-1 is composed of 14 different subunits. Subunits NuoB, C, D, E, F, and G constitute the peripheral sector of the complex.

The protein resides in the cell inner membrane. The catalysed reaction is a quinone + NADH + 5 H(+)(in) = a quinol + NAD(+) + 4 H(+)(out). In terms of biological role, NDH-1 shuttles electrons from NADH, via FMN and iron-sulfur (Fe-S) centers, to quinones in the respiratory chain. The immediate electron acceptor for the enzyme in this species is believed to be ubiquinone. Couples the redox reaction to proton translocation (for every two electrons transferred, four hydrogen ions are translocated across the cytoplasmic membrane), and thus conserves the redox energy in a proton gradient. This is NADH-quinone oxidoreductase subunit D from Neisseria meningitidis serogroup A / serotype 4A (strain DSM 15465 / Z2491).